Consider the following 74-residue polypeptide: Ubiquitin-like protein FUBI (74 aa).

It belongs to the ubiquitin family.

In terms of biological role, confers arsenite resistance. This chain is Ubiquitin-like protein FUBI (FAU), found in Cricetulus griseus (Chinese hamster).